Reading from the N-terminus, the 42-residue chain is CAKKRNWCGKTEDCCCPMKCVYAWYNEQGSCQSTISALWKKC.

4 disulfide bridges follow: Cys1/Cys15, Cys8/Cys20, Cys14/Cys31, and Cys16/Cys42.

It belongs to the neurotoxin 06 (delta-actx) family. As to expression, expressed by the venom gland.

The protein localises to the secreted. Functionally, inhibits tetrodotoxin-sensitive voltage-gated sodium channels (Nav) by binding to site 3. Slows the inactivation, and causes a prolongation of action potential duration resulting in repetitive firing in autonomic and motor nerve fibers. Does not depolarize the resting potential. Does not affect tetrodotoxin-resistant sodium channels. This lethal neurotoxin is active on both insect and mammalian voltage-gated sodium channels. Pan-neuronal expression in Drosophila is lethal but flies engineered to express the toxin only in pacemaker neurons have profound defects in circadian rhythm but a normal lifespan. The protein is Delta-hexatoxin-Hv1a of Hadronyche versuta (Blue mountains funnel-web spider).